A 244-amino-acid polypeptide reads, in one-letter code: Phosphoadenosine 5'-phosphosulfate reductase (244 aa).

The active-site Nucleophile; cysteine thiosulfonate intermediate is C239.

The protein belongs to the PAPS reductase family. CysH subfamily.

It localises to the cytoplasm. The enzyme catalyses [thioredoxin]-disulfide + sulfite + adenosine 3',5'-bisphosphate + 2 H(+) = [thioredoxin]-dithiol + 3'-phosphoadenylyl sulfate. It participates in sulfur metabolism; hydrogen sulfide biosynthesis; sulfite from sulfate: step 3/3. Catalyzes the formation of sulfite from phosphoadenosine 5'-phosphosulfate (PAPS) using thioredoxin as an electron donor. The polypeptide is Phosphoadenosine 5'-phosphosulfate reductase (Escherichia coli (strain K12 / MC4100 / BW2952)).